The following is a 482-amino-acid chain: UDP-N-acetylmuramate--L-alanine ligase (482 aa).

Position 111–117 (111–117 (GTHGKTT)) interacts with ATP.

It belongs to the MurCDEF family.

It localises to the cytoplasm. The enzyme catalyses UDP-N-acetyl-alpha-D-muramate + L-alanine + ATP = UDP-N-acetyl-alpha-D-muramoyl-L-alanine + ADP + phosphate + H(+). The protein operates within cell wall biogenesis; peptidoglycan biosynthesis. Its function is as follows. Cell wall formation. The protein is UDP-N-acetylmuramate--L-alanine ligase of Symbiobacterium thermophilum (strain DSM 24528 / JCM 14929 / IAM 14863 / T).